The sequence spans 191 residues: Scytalone dehydratase PfmaJ (191 aa).

3 residues coordinate substrate: tyrosine 25, tyrosine 45, and phenylalanine 48. Residues histidine 80 and histidine 105 contribute to the active site. Asparagine 126 is a binding site for substrate.

The protein belongs to the scytalone dehydratase family. As to quaternary structure, homotrimer. Each subunit contains an active site, located in the central part of the hydrophobic core of the monomer, which functions independently.

Its subcellular location is the endosome. It carries out the reaction scytalone = 1,3,8-trihydroxynaphthalene + H2O. The protein operates within pigment biosynthesis; melanin biosynthesis. Functionally, scytalone dehydratase involved the biosynthesis of dihydroxynaphthalene (DHN)-melanin, a bluish-green pigment forming a dark layer in the conidial wall that protects the conidia from UV radiations. The first step of the pathway is the production of the pentaketide 1,3,6,8-tetrahydroxynaphthalene (1,3,6,8-THN or T4HN) by the polyketide synthase PfmaE though condensation of acetyl-CoA with malonyl-CoA. T4HN is not stable and easily oxidizes into the stable form flaviolin. T4HN is also substrate of the hydroxynaphthalene reductase PfmaG to yield scytalone. The scytalone dehydratase PfmaJ then reduces scytalone to 1,3,8-THN. 1,3,8-THN is then substrate of the hydroxynaphthalene reductase PfmaI to yield vermelone. Vermelone is further converted by the multicopper oxidase PfmaD to 1,8-DHN. Finally the laccase PFICI_06862 transforms 1,8-DHN to DHN-melanin. The roles of the 5-oxoprolinase PfmaA and the proline iminopeptidase PfmaB within the cluster have not been elucidated yet. The sequence is that of Scytalone dehydratase PfmaJ from Pestalotiopsis fici (strain W106-1 / CGMCC3.15140).